Reading from the N-terminus, the 132-residue chain is Pre-histone-like nucleoprotein (132 aa).

The propeptide occupies 2–23 (AILISPSNNTGWGLGTHKLFGG). The Nuclear localization signal motif lies at 124–132 (RRKRRVRSK).

The protein belongs to the adenoviridae histone-like nucleoprotein family. In terms of assembly, interacts with the core-capsid bridging protein; this interaction bridges the virus core to the capsid. Interacts with host NPM1; this interaction might play a role in placing the pre-histone-like nucleoprotein on the viral DNA or regulating viral gene expression. Interacts with host HMGB1; this interaction inhibits host immune response. In terms of processing, cleaved near the N-terminus by the viral protease during virion maturation to form the mature protein.

It localises to the virion. The protein localises to the host nucleus. It is found in the host nucleolus. Plays a role in the inhibition of host immune response within the nucleus. Interacts with cellular nucleosomes and immobilizes the host immune danger signal HMGB1 on chromatin. In turn, prevents HMGB1 release out of the cell and thus decreases inflammation. Also plays a role in the wrapping and condensation of the viral DNA. May also promote viral genome import into the nucleus. This is Pre-histone-like nucleoprotein from Canine adenovirus serotype 1 (strain CLL) (CAdV-1).